The following is a 223-amino-acid chain: Cytidylate kinase (223 aa).

12–20 provides a ligand contact to ATP; sequence GPAGSGKST.

This sequence belongs to the cytidylate kinase family. Type 1 subfamily.

It localises to the cytoplasm. The enzyme catalyses CMP + ATP = CDP + ADP. It carries out the reaction dCMP + ATP = dCDP + ADP. The chain is Cytidylate kinase from Onion yellows phytoplasma (strain OY-M).